Consider the following 256-residue polypeptide: Dioxygenase lolE1 (256 aa).

Fe cation contacts are provided by histidine 125, aspartate 127, and histidine 203.

The protein belongs to the PhyH family. In terms of assembly, homodimer. The cofactor is Fe cation.

The protein operates within alkaloid biosynthesis. Dioxygenase; part of the gene cluster that mediates the biosynthesis of loline alkaloids, potent insecticidal agents composed of a pyrrolizidine ring system and an uncommon ether bridge linking carbons 2 and 7. Lolines are structurally differentiated by the various modifications of the L-amino group and include norloline, loline, N-methylloline, N-acetylloline, N-acetylnorloline, and N-formylloline. The first committed step is the condensation of O-acetyl-L-homoserine (derived from L-aspartic acid) and L-proline, probably catalyzed by the gamma-type pyridoxal 5'-phosphate(PLP)-dependent enzyme lolC, to give the diamino diacid, NACPP. Ensuing cyclization, decarboxylation, and acetylation steps yield 1-exo-acetamidopyrrolizidine (AcAP). LolO is required for installation of the ether bridge upon the pathway intermediate, 1-exo-acetamidopyrrolizidine (AcAP). In sequential 2-oxoglutarate- and O(2)-consuming steps, lolO removes hydrogens from C2 and C7 of AcAP to form both carbon-oxygen bonds in N-acetylnorloline (NANL), the precursor to all other lolines. The enzymes lolD, lolE, lolF and lolT have also been proposed to be involved in the ether-bridge installation. Further processing of the exocyclic moiety of NANL by fungal N-acetamidase (LolN), methyltransferase (LolM), and cytochrome P450 (LolP) enzymes, with occasional involvement of a plant acetyltransferase, generates the other known lolines. LolN transforms NANL to norlonine which is monomethylated and dimethylated to respectively lonine and N-methyllonine (NML) by lolM. LolP catalyzes hydroxylation of the methyl group in N-methylloline (NML) and further oxygenation to N-formylloline (NFL). A plant acetyltransferase is responsible for the acetylation of loline to form N-acetylloline (NAL). LolA might interact with aspartate kinase to prevent feedback inhibition of its activity by these end products and thereby promote production of L-homoserine from L-aspartate. This Epichloe uncinata (Endophyte fungus) protein is Dioxygenase lolE1.